The primary structure comprises 152 residues: Ribosome maturation factor RimP (152 aa).

Belongs to the RimP family.

It is found in the cytoplasm. In terms of biological role, required for maturation of 30S ribosomal subunits. This chain is Ribosome maturation factor RimP, found in Porphyromonas gingivalis (strain ATCC BAA-308 / W83).